The chain runs to 212 residues: Fe/S biogenesis protein NfuA (212 aa).

[4Fe-4S] cluster is bound by residues C169 and C172.

The protein belongs to the NfuA family. As to quaternary structure, homodimer. [4Fe-4S] cluster serves as cofactor.

Its function is as follows. Involved in iron-sulfur cluster biogenesis. Binds a 4Fe-4S cluster, can transfer this cluster to apoproteins, and thereby intervenes in the maturation of Fe/S proteins. Could also act as a scaffold/chaperone for damaged Fe/S proteins. In Acinetobacter baumannii (strain AB307-0294), this protein is Fe/S biogenesis protein NfuA.